The chain runs to 545 residues: MVTIEALPLRPIEGEQQALHVGAHSSASDPRRTMVTNTSESPLASRQATLTTSTRQKHTSYRLNTAFFLFGLLNNSLYVVILTAALELLPQGVPTGLVSFANIFPALIAKAIWPYFLRGQVRYSKRVWSCAALSFIGMLLVSFFPALAMRLVGISLASFSSGLGELTFLQLSTRYAPKSSETRSGLTAAQAAGAGLETSFAGDAVGWFASGTGAAGLIGAAAWWVVRPLGVQTGMAILSVLPAFMIMAYAIILPSVQELLEGKDGKGGAMYAPLSTEDDAVERSSSDDQPTTANDDRQDSTIHIGPGSEQDVKVRLSFQEKMALLKPMLQPYIIPLVIVYAMEYTINQGIAPTLIYPLPTRSSHPLLSHIIRKLTDYYPLYQLVYQTFVFLSRSSISIFKLPAIPRHLLWLPAVLQTGLLAVLLTESLYAWFRESIASPLVIVLICVEGLAGGSAYVSVFYSIGVDEQGRGIALPSTGEEVDDEGQEEDSAYTMAKKAQEHEFRIGCVGFGDSLGILAASLISMPLQVSLCDAQVRSGRDLCKQT.

Residues 23 to 49 (AHSSASDPRRTMVTNTSESPLASRQAT) are disordered. A compositionally biased stretch (polar residues) spans 34 to 49 (MVTNTSESPLASRQAT). 5 consecutive transmembrane segments (helical) span residues 66–86 (AFFL…TAAL), 97–117 (LVSF…PYFL), 127–147 (VWSC…FPAL), 205–225 (VGWF…AWWV), and 234–254 (GMAI…IILP). Residues 276 to 304 (TEDDAVERSSSDDQPTTANDDRQDSTIHI) are disordered. 3 consecutive transmembrane segments (helical) span residues 322 to 342 (MALL…VYAM), 408 to 428 (LLWL…TESL), and 440 to 460 (LVIV…VSVF).

It belongs to the battenin family.

Its subcellular location is the vacuole membrane. In terms of biological role, involved in vacuolar transport and vacuole pH homeostasis. Also required for cytokinesis. This Mycosarcoma maydis (Corn smut fungus) protein is Protein BTN1 (BTN1).